We begin with the raw amino-acid sequence, 378 residues long: Chaperone protein DnaJ (378 aa).

Residues 5–72 form the J domain; sequence DFYEVLGVPK…QKRAAYDQFG (68 aa). A CR-type zinc finger spans residues 138 to 216; that stretch reads GKEAQIRIPS…CHGQGKVKKQ (79 aa). Cysteine 151, cysteine 154, cysteine 168, cysteine 171, cysteine 190, cysteine 193, cysteine 204, and cysteine 207 together coordinate Zn(2+). CXXCXGXG motif repeat units follow at residues 151 to 158, 168 to 175, 190 to 197, and 204 to 211; these read CETCHGSG, CTTCSGTG, CPHCRGTG, and CVTCHGQG. The interval 354-378 is disordered; the sequence is SLKKGGGKHSPSGESWTDRLKNLFT. Over residues 369-378 the composition is skewed to basic and acidic residues; it reads WTDRLKNLFT.

It belongs to the DnaJ family. Homodimer. Requires Zn(2+) as cofactor.

It localises to the cytoplasm. Its function is as follows. Participates actively in the response to hyperosmotic and heat shock by preventing the aggregation of stress-denatured proteins and by disaggregating proteins, also in an autonomous, DnaK-independent fashion. Unfolded proteins bind initially to DnaJ; upon interaction with the DnaJ-bound protein, DnaK hydrolyzes its bound ATP, resulting in the formation of a stable complex. GrpE releases ADP from DnaK; ATP binding to DnaK triggers the release of the substrate protein, thus completing the reaction cycle. Several rounds of ATP-dependent interactions between DnaJ, DnaK and GrpE are required for fully efficient folding. Also involved, together with DnaK and GrpE, in the DNA replication of plasmids through activation of initiation proteins. This chain is Chaperone protein DnaJ, found in Paracidovorax citrulli (strain AAC00-1) (Acidovorax citrulli).